The chain runs to 627 residues: Hemocyanin B chain (627 aa).

3 residues coordinate Cu cation: His-173, His-177, and His-204. N-linked (GlcNAc...) asparagine glycans are attached at residues Asn-312 and Asn-316. The Cu cation site is built by His-324, His-328, and His-364. Cys-534 and Cys-582 are joined by a disulfide.

This sequence belongs to the tyrosinase family. Hemocyanin subfamily. In terms of assembly, tarantula hemocyanin is a 24-chain polymer with seven different chains identified. In terms of tissue distribution, hemolymph.

Its subcellular location is the secreted. It localises to the extracellular space. Its function is as follows. Hemocyanins are copper-containing oxygen carriers occurring freely dissolved in the hemolymph of many mollusks and arthropods. This chain is Hemocyanin B chain (HCB), found in Aphonopelma sp. (American tarantula).